Reading from the N-terminus, the 699-residue chain is Mannan-binding lectin serine protease 1 (699 aa).

The N-terminal stretch at 1–19 (MRWLLLYYALCFSLSKASA) is a signal peptide. Residues 20 to 138 (HTVELNNMFG…TGFDAHYMAV (119 aa)) enclose the CUB 1 domain. A homodimerization region spans residues 20–184 (HTVELNNMFG…HTDNRTCRVE (165 aa)). An interaction with MBL2 region spans residues 20 to 184 (HTVELNNMFG…HTDNRTCRVE (165 aa)). An interaction with FCN2 region spans residues 20–278 (HTVELNNMFG…STQSHSVLIL (259 aa)). N-linked (GlcNAc...) asparagine glycosylation occurs at asparagine 49. Glutamate 68, aspartate 76, aspartate 121, serine 123, aspartate 139, valine 140, and glutamate 142 together coordinate Ca(2+). A disulfide bridge links cysteine 73 with cysteine 91. The region spanning 139–182 (DVDECKEREDEELSCDHYCHNYIGGYYCSCRFGYILHTDNRTCR) is the EGF-like; calcium-binding domain. 4 disulfides stabilise this stretch: cysteine 143–cysteine 157, cysteine 153–cysteine 166, cysteine 168–cysteine 181, and cysteine 185–cysteine 212. Ca(2+) is bound by residues asparagine 159, tyrosine 160, and glycine 163. Asparagine 159 carries the (3R)-3-hydroxyasparagine modification. Asparagine 178 is a glycosylation site (N-linked (GlcNAc...) (complex) asparagine). One can recognise a CUB 2 domain in the interval 185–297 (CSDNLFTQRT…RGWRLSYRAA (113 aa)). Ca(2+) is bound by residues glutamate 235, aspartate 245, aspartate 282, and serine 284. A disulfide bridge connects residues cysteine 242 and cysteine 260. Sushi domains are found at residues 299–364 (NECP…TCKI) and 365–434 (VDCR…TCLP). 6 disulfides stabilise this stretch: cysteine 301–cysteine 349, cysteine 329–cysteine 362, cysteine 367–cysteine 414, cysteine 397–cysteine 432, cysteine 436–cysteine 572, and cysteine 475–cysteine 491. Asparagine 385 carries N-linked (GlcNAc...) (complex) asparagine glycosylation. Residue asparagine 407 is glycosylated (N-linked (GlcNAc...) asparagine). In terms of domain architecture, Peptidase S1 spans 449 to 696 (IFNGRPAQKG…NKDWIQRVTG (248 aa)). Histidine 490 serves as the catalytic Charge relay system. Leucine 533 carries N-linked (GlcNAc) asparagine glycosylation. The active-site Charge relay system is the aspartate 552. Glutamate 599 is a glycosylation site (N-linked (GlcNAc) asparagine). 2 cysteine pairs are disulfide-bonded: cysteine 614–cysteine 631 and cysteine 642–cysteine 672. Catalysis depends on serine 646, which acts as the Charge relay system.

This sequence belongs to the peptidase S1 family. As to quaternary structure, homodimer. Interacts with the oligomeric lectins MBL2, FCN2 and FCN3; triggers the lectin pathway of complement through activation of C3. Interacts with SERPING1. Interacts with COLEC11; probably triggers the lectin pathway of complement. In terms of processing, the iron and 2-oxoglutarate dependent 3-hydroxylation of aspartate and asparagine is (R) stereospecific within EGF domains. Post-translationally, N-glycosylated. Some N-linked glycan are of the complex-type. Autoproteolytic processing of the proenzyme produces the active enzyme composed on the heavy and the light chain held together by a disulfide bond. Isoform 1 but not isoform 2 is activated through autoproteolytic processing. In terms of tissue distribution, protein of the plasma which is primarily expressed by liver.

The protein localises to the secreted. With respect to regulation, inhibited by SERPING1 and A2M. In terms of biological role, functions in the lectin pathway of complement, which performs a key role in innate immunity by recognizing pathogens through patterns of sugar moieties and neutralizing them. The lectin pathway is triggered upon binding of mannan-binding lectin (MBL) and ficolins to sugar moieties which leads to activation of the associated proteases MASP1 and MASP2. Functions as an endopeptidase and may activate MASP2 or C2 or directly activate C3 the key component of complement reaction. Isoform 2 may have an inhibitory effect on the activation of the lectin pathway of complement or may cleave IGFBP5. Also plays a role in development. The sequence is that of Mannan-binding lectin serine protease 1 (MASP1) from Homo sapiens (Human).